The primary structure comprises 467 residues: MGGSREEDRQHHNHLPSELPLGFRSSSPTTMIASSSMSKESSNYDMADFDQASLFLYLDSHDQQSIQEQRQTLNIFPSQPMHVADPAHEAKSAGVAMAMLPNGNQLQVLPSHPSKKPDQQGGQKINSSVPTNPPGPNLPLPNSAKDNKNSSLIKKEGSSSGKGATTSNDPEREGRRTLDPKTLRRLAQNREAARKSRLRKKAYIQQLESSRIRLSQLEQQVHVARVQGAMLGAGDQHQGLPSGPSAASLFDLEYGRWVEEHSKLIFQLRAALNEQMADSQLQVFVNGAMAQHDELLSLKGAIARADIFHLLCGVWATPAERCFLWLGGFRPSEAIKVMLKQVEPLSEGQLMSIYELQQAAKGTEDALSHAMDGLQQSLSDTVAAPDVAAAGGFMGHMSLAMNKISAMEDIVRQADGLRQQTLHKLQHMLTIRQAARCFVAISDYFHRLRALSTLWVARPRPEEGPAM.

The segment covering M1–Q10 has biased composition (basic and acidic residues). Disordered regions lie at residues M1–S42 and Q105–R184. Low complexity predominate over residues S25–S41. Residues Q120–V129 are compositionally biased toward polar residues. Over residues K145–G157 the composition is skewed to basic and acidic residues. The segment covering S158–N168 has biased composition (polar residues). The segment covering D169 to T182 has biased composition (basic and acidic residues). The 45-residue stretch at D179 to V223 folds into the bZIP domain. The tract at residues K181–K201 is basic motif. Positions L207 to V221 are leucine-zipper. In terms of domain architecture, DOG1 spans A247 to R458.

This sequence belongs to the bZIP family. As to quaternary structure, interacts with NPR5/NH4, NH5.1 and NH5.2.

The protein resides in the nucleus. In terms of biological role, transcriptional regulator involved in defense response. This Oryza sativa subsp. japonica (Rice) protein is Transcription factor TGAL7.